Here is a 147-residue protein sequence, read N- to C-terminus: Gastrula-specific protein 17 (147 aa).

Residues 1 to 119 are disordered; sequence MSQNLDFLAL…TQVYGNHQPG (119 aa). Composition is skewed to polar residues over residues 20-36, 45-57, and 74-88; these read SPTSRHPSPKVWNSTPP, RQISPTPDQYTNP, and LLQNQRQSWGLSPTA.

The polypeptide is Gastrula-specific protein 17 (gs17) (Xenopus laevis (African clawed frog)).